The sequence spans 255 residues: Triosephosphate isomerase (255 aa).

10 to 12 (NWK) provides a ligand contact to substrate. Histidine 96 acts as the Electrophile in catalysis. The Proton acceptor role is filled by glutamate 169. Residues glycine 175, serine 214, and 235–236 (GG) each bind substrate.

This sequence belongs to the triosephosphate isomerase family. In terms of assembly, homodimer.

It is found in the cytoplasm. It catalyses the reaction D-glyceraldehyde 3-phosphate = dihydroxyacetone phosphate. Its pathway is carbohydrate biosynthesis; gluconeogenesis. It functions in the pathway carbohydrate degradation; glycolysis; D-glyceraldehyde 3-phosphate from glycerone phosphate: step 1/1. Its function is as follows. Involved in the gluconeogenesis. Catalyzes stereospecifically the conversion of dihydroxyacetone phosphate (DHAP) to D-glyceraldehyde-3-phosphate (G3P). The polypeptide is Triosephosphate isomerase (Coxiella burnetii (strain Dugway 5J108-111)).